The primary structure comprises 95 residues: Acylphosphatase (95 aa).

The Acylphosphatase-like domain maps to 5-93 (RAHVFIRGKV…GEFKDFKILP (89 aa)). Active-site residues include arginine 20 and asparagine 38.

It belongs to the acylphosphatase family.

It carries out the reaction an acyl phosphate + H2O = a carboxylate + phosphate + H(+). The chain is Acylphosphatase (acyP) from Pyrobaculum aerophilum (strain ATCC 51768 / DSM 7523 / JCM 9630 / CIP 104966 / NBRC 100827 / IM2).